Reading from the N-terminus, the 110-residue chain is Protein RnfH (110 aa).

The segment at 86 to 110 (RQRRVEKTRKAGSIEGRRWQNKDSR) is disordered. Residues 100–110 (EGRRWQNKDSR) show a composition bias toward basic and acidic residues.

The protein belongs to the UPF0125 (RnfH) family.

This is Protein RnfH from Paraburkholderia xenovorans (strain LB400).